A 441-amino-acid polypeptide reads, in one-letter code: ATP-dependent RNA helicase sub2 (441 aa).

A compositionally biased stretch (low complexity) spans 19-29; sequence DAAATTAAPAA. A disordered region spans residues 19-43; it reads DAAATTAAPAANGAQDKKGDLTVSG. Residues 58–86 carry the Q motif motif; it reads TGFRDFLLKGELLRAITDCGFEHPSEVQQ. Residues 89–264 form the Helicase ATP-binding domain; the sequence is IPTAILNVDV…KKFMRNPLEV (176 aa). 102–109 is an ATP binding site; the sequence is AKSGLGKT. The DEAD box motif lies at 211 to 214; sequence DECD. One can recognise a Helicase C-terminal domain in the interval 276–437; sequence GLQQYYIKLS…EYPEGGVDSS (162 aa).

The protein belongs to the DEAD box helicase family. DECD subfamily.

Its subcellular location is the nucleus. It catalyses the reaction ATP + H2O = ADP + phosphate + H(+). In terms of biological role, ATP-binding RNA helicase involved in transcription elongation and required for the export of mRNA out of the nucleus. SUB2 also plays a role in pre-mRNA splicing and spliceosome assembly. May be involved in rDNA and telomeric silencing, and maintenance of genome integrity. The protein is ATP-dependent RNA helicase sub2 (sub2) of Neosartorya fischeri (strain ATCC 1020 / DSM 3700 / CBS 544.65 / FGSC A1164 / JCM 1740 / NRRL 181 / WB 181) (Aspergillus fischerianus).